A 142-amino-acid polypeptide reads, in one-letter code: Transcriptional regulator MraZ (142 aa).

SpoVT-AbrB domains lie at 5–47 and 76–119; these read EYQH…TINE and ACIV…SREK.

It belongs to the MraZ family. As to quaternary structure, forms oligomers.

Its subcellular location is the cytoplasm. It is found in the nucleoid. This is Transcriptional regulator MraZ from Clostridium botulinum (strain Eklund 17B / Type B).